The primary structure comprises 892 residues: Translation initiation factor IF-2 (892 aa).

Positions 88–305 (KKRTFVKRDP…SLQQGFQKPA (218 aa)) are disordered. Composition is skewed to basic and acidic residues over residues 93–159 (VKRD…KDKV) and 166–216 (DMTK…EENK). Basic residues predominate over residues 254–269 (GRGRNAKAARPAKKGK). Positions 270–282 (HAESKADREEARA) are enriched in basic and acidic residues. The tr-type G domain occupies 391 to 560 (PRAPVVTIMG…LLQAEVLELK (170 aa)). The G1 stretch occupies residues 400–407 (GHVDHGKT). 400 to 407 (GHVDHGKT) contributes to the GTP binding site. A G2 region spans residues 425 to 429 (GITQH). The tract at residues 446 to 449 (DTPG) is G3. GTP is bound by residues 446–450 (DTPGH) and 500–503 (NKID). The segment at 500–503 (NKID) is G4. A G5 region spans residues 536-538 (SAK).

It belongs to the TRAFAC class translation factor GTPase superfamily. Classic translation factor GTPase family. IF-2 subfamily.

The protein localises to the cytoplasm. One of the essential components for the initiation of protein synthesis. Protects formylmethionyl-tRNA from spontaneous hydrolysis and promotes its binding to the 30S ribosomal subunits. Also involved in the hydrolysis of GTP during the formation of the 70S ribosomal complex. The protein is Translation initiation factor IF-2 of Salmonella paratyphi A (strain ATCC 9150 / SARB42).